An 82-amino-acid polypeptide reads, in one-letter code: Translational regulator CsrA (82 aa).

This sequence belongs to the CsrA/RsmA family. As to quaternary structure, homodimer; the beta-strands of each monomer intercalate to form a hydrophobic core while the alpha-helices form wings that extend away from the core. Each of the alpha-helical wings interacts with an FliW monomer, yielding a FliW-CsrA(2)-FliW complex.

The protein resides in the cytoplasm. Its function is as follows. A translational regulator that binds mRNA to regulate translation initiation and/or mRNA stability. Usually binds in the 5'-UTR at or near the Shine-Dalgarno sequence preventing ribosome-binding, thus repressing translation. Its main target seems to be the major flagellin gene, while its function is anatagonized by FliW. This is Translational regulator CsrA from Geobacillus thermodenitrificans (strain NG80-2).